The primary structure comprises 163 residues: Acetolactate synthase isozyme 3 small subunit (163 aa).

Residues 4 to 78 (ILSVLLENES…DVLRVSELGQ (75 aa)) form the ACT domain.

It belongs to the acetolactate synthase small subunit family. As to quaternary structure, dimer of large and small chains.

It carries out the reaction 2 pyruvate + H(+) = (2S)-2-acetolactate + CO2. Its pathway is amino-acid biosynthesis; L-isoleucine biosynthesis; L-isoleucine from 2-oxobutanoate: step 1/4. It participates in amino-acid biosynthesis; L-valine biosynthesis; L-valine from pyruvate: step 1/4. With respect to regulation, sensitive to valine inhibition. The chain is Acetolactate synthase isozyme 3 small subunit (ilvH) from Escherichia coli (strain K12).